A 475-amino-acid polypeptide reads, in one-letter code: Fez family zinc finger protein 1 (475 aa).

The Engrailed homology 1 repressor signature appears at 28–43 (PLAFSIERIMARTPEP). C2H2-type zinc fingers lie at residues 260-282 (FTCE…MPVH), 288-310 (FVCK…KIIH), 316-338 (HKCN…TRIH), 344-366 (FVCE…KLTH), 372-394 (FKCN…MHTH), and 400-423 (FTCP…RKLH). The segment at 428–475 (GLARTPAGEPGTEPPPPLPQQPPMTLPPLQPPLPTPGPLQPGLHQGHQ) is disordered. Positions 439-466 (TEPPPPLPQQPPMTLPPLQPPLPTPGPL) are enriched in pro residues.

The protein belongs to the krueppel C2H2-type zinc-finger protein family. As to expression, expressed in brain. Little or no expression in other tissues. Overexpressed specifically in gastric cancers. A 2- to 20-fold increase is found in over 50% of gastric cancer tissues.

The protein localises to the nucleus. Its function is as follows. Transcription repressor. Involved in the axonal projection and proper termination of olfactory sensory neurons (OSN). Plays a role in rostro-caudal patterning of the diencephalon and in prethalamic formation. Expression is required in OSN to cell-autonomously regulate OSN axon projections. Regulates non-cell-autonomously the layer formation of the olfactory bulb development and the interneurons. May be required for correct rostral migration of the interneuron progenitors. The sequence is that of Fez family zinc finger protein 1 (FEZF1) from Homo sapiens (Human).